We begin with the raw amino-acid sequence, 153 residues long: Ribosome maturation factor RimP (153 aa).

This sequence belongs to the RimP family.

The protein localises to the cytoplasm. Its function is as follows. Required for maturation of 30S ribosomal subunits. The protein is Ribosome maturation factor RimP of Trichormus variabilis (strain ATCC 29413 / PCC 7937) (Anabaena variabilis).